The following is a 268-amino-acid chain: Protein MGF 300-1L (268 aa).

Residues 1–175 (MVSLTTCCLK…QTFKIFYAKN (175 aa)) are Cytoplasmic-facing. A helical membrane pass occupies residues 176–193 (YSLSTLYCIFLAIYYKRY). The Extracellular portion of the chain corresponds to 194–268 (TALRKMVKIY…MYAFSQNNFW (75 aa)).

Belongs to the asfivirus MGF 300 family.

Its subcellular location is the host membrane. Its function is as follows. Plays a role in virus cell tropism, and may be required for efficient virus replication in macrophages. This is Protein MGF 300-1L from African swine fever virus (isolate Tick/South Africa/Pretoriuskop Pr4/1996) (ASFV).